A 450-amino-acid chain; its full sequence is UDP-N-acetylmuramoylalanine--D-glutamate ligase (450 aa).

119-125 (GSNGKTT) contributes to the ATP binding site.

Belongs to the MurCDEF family.

The protein localises to the cytoplasm. It catalyses the reaction UDP-N-acetyl-alpha-D-muramoyl-L-alanine + D-glutamate + ATP = UDP-N-acetyl-alpha-D-muramoyl-L-alanyl-D-glutamate + ADP + phosphate + H(+). Its pathway is cell wall biogenesis; peptidoglycan biosynthesis. Functionally, cell wall formation. Catalyzes the addition of glutamate to the nucleotide precursor UDP-N-acetylmuramoyl-L-alanine (UMA). This is UDP-N-acetylmuramoylalanine--D-glutamate ligase from Streptococcus pneumoniae (strain JJA).